Here is a 42-residue protein sequence, read N- to C-terminus: Profilin (42 aa).

It belongs to the profilin family. Occurs in many kinds of cells as a complex with monomeric actin in a 1:1 ratio.

The protein resides in the cytoplasm. It is found in the cytoskeleton. In terms of biological role, binds to actin and affects the structure of the cytoskeleton. At high concentrations, profilin prevents the polymerization of actin, whereas it enhances it at low concentrations. This is Profilin from Plantago lanceolata (English plantain).